The sequence spans 312 residues: Putative olfactory receptor 1F2 (312 aa).

The Extracellular portion of the chain corresponds to 1 to 25 (MERDKPVSVSEFLLLGLSRQPQQQH). The chain crosses the membrane as a helical span at residues 26 to 49 (LLFVFFLSMYLATVLGNLLIILAI). The Cytoplasmic portion of the chain corresponds to 50 to 57 (SIDSRLHT). A helical transmembrane segment spans residues 58–78 (PMYFFLSNMSFVDNCFSTTVP). Topologically, residues 79 to 99 (KMLANHILRTQTISFSGCLMQ) are extracellular. An intrachain disulfide couples Cys96 to Cys188. The helical transmembrane segment at 100–119 (MYFISELADMDNFLLAVMAY) threads the bilayer. At 120–138 (DRFVAVCRPLHYTAKMIHQ) the chain is on the cytoplasmic side. The chain crosses the membrane as a helical span at residues 139–157 (LCALLVTGSWVVANSNALL). The Extracellular segment spans residues 158 to 195 (HTLLMARLSFCADNTIPHIFCDVTPLLKLSCSDTHLSE). A helical transmembrane segment spans residues 196 to 218 (VMILTEAALVTITPFLCLLASYM). The Cytoplasmic portion of the chain corresponds to 219–235 (HITCVVLRVPSTKGRWK). The helical transmembrane segment at 236–258 (AFSTCGSHLAVVLLFYGTIMSPY) threads the bilayer. Over 259–271 (FRTSSSHSAQRDI) the chain is Extracellular. Residues 272–291 (AAAVRFTVVTPVMNPLIYSL) traverse the membrane as a helical segment. Residues 292-312 (RNKDIKGALVKVVAVKFFSVQ) lie on the Cytoplasmic side of the membrane.

The protein belongs to the G-protein coupled receptor 1 family.

Its subcellular location is the cell membrane. Odorant receptor. The polypeptide is Putative olfactory receptor 1F2 (OR1F2P) (Homo sapiens (Human)).